A 189-amino-acid chain; its full sequence is Threonylcarbamoyl-AMP synthase (189 aa).

One can recognise a YrdC-like domain in the interval Asn7–Ser189.

The protein belongs to the SUA5 family. TsaC subfamily.

The protein resides in the cytoplasm. The enzyme catalyses L-threonine + hydrogencarbonate + ATP = L-threonylcarbamoyladenylate + diphosphate + H2O. Required for the formation of a threonylcarbamoyl group on adenosine at position 37 (t(6)A37) in tRNAs that read codons beginning with adenine. Catalyzes the conversion of L-threonine, HCO(3)(-)/CO(2) and ATP to give threonylcarbamoyl-AMP (TC-AMP) as the acyladenylate intermediate, with the release of diphosphate. In Cellvibrio japonicus (strain Ueda107) (Pseudomonas fluorescens subsp. cellulosa), this protein is Threonylcarbamoyl-AMP synthase.